A 297-amino-acid chain; its full sequence is Homoserine kinase (297 aa).

ATP is bound at residue 85 to 95 (PPTRGMGSSSA).

It belongs to the GHMP kinase family. Homoserine kinase subfamily.

It localises to the cytoplasm. The catalysed reaction is L-homoserine + ATP = O-phospho-L-homoserine + ADP + H(+). It functions in the pathway amino-acid biosynthesis; L-threonine biosynthesis; L-threonine from L-aspartate: step 4/5. In terms of biological role, catalyzes the ATP-dependent phosphorylation of L-homoserine to L-homoserine phosphate. The sequence is that of Homoserine kinase from Desulfitobacterium hafniense (strain DSM 10664 / DCB-2).